The chain runs to 114 residues: U17-barytoxin-Tl1d (114 aa).

The N-terminal stretch at 1-20 (MKTIIVFLSLLVLATKFGDA) is a signal peptide. Residues 21–74 (NEGVNQEQMKEVIQNEFREDFLNEMAPMSLLQQLEAIESTLLEKEADRNSRQKR) constitute a propeptide that is removed on maturation. 3 disulfide bridges follow: C75/C88, C82/C93, and C87/C108.

This sequence belongs to the neurotoxin 14 (magi-1) family. 03 (ICK-30-40) subfamily. Expressed by the venom gland.

Its subcellular location is the secreted. In terms of biological role, ion channel inhibitor. The sequence is that of U17-barytoxin-Tl1d from Trittame loki (Brush-footed trapdoor spider).